The chain runs to 261 residues: 3-methyl-2-oxobutanoate hydroxymethyltransferase (261 aa).

Mg(2+) is bound by residues aspartate 47 and aspartate 86. Residues aspartate 47–serine 48, aspartate 86, and lysine 116 contribute to the 3-methyl-2-oxobutanoate site. Glutamate 118 is a Mg(2+) binding site. Catalysis depends on glutamate 186, which acts as the Proton acceptor.

This sequence belongs to the PanB family. Homodecamer; pentamer of dimers. Mg(2+) serves as cofactor.

It is found in the cytoplasm. The catalysed reaction is 3-methyl-2-oxobutanoate + (6R)-5,10-methylene-5,6,7,8-tetrahydrofolate + H2O = 2-dehydropantoate + (6S)-5,6,7,8-tetrahydrofolate. Its pathway is cofactor biosynthesis; (R)-pantothenate biosynthesis; (R)-pantoate from 3-methyl-2-oxobutanoate: step 1/2. Functionally, catalyzes the reversible reaction in which hydroxymethyl group from 5,10-methylenetetrahydrofolate is transferred onto alpha-ketoisovalerate to form ketopantoate. The sequence is that of 3-methyl-2-oxobutanoate hydroxymethyltransferase from Thermosynechococcus vestitus (strain NIES-2133 / IAM M-273 / BP-1).